The sequence spans 117 residues: UPF0122 protein Dred_2057 (117 aa).

This sequence belongs to the UPF0122 family.

Functionally, might take part in the signal recognition particle (SRP) pathway. This is inferred from the conservation of its genetic proximity to ftsY/ffh. May be a regulatory protein. This chain is UPF0122 protein Dred_2057, found in Desulforamulus reducens (strain ATCC BAA-1160 / DSM 100696 / MI-1) (Desulfotomaculum reducens).